The sequence spans 120 residues: Large ribosomal subunit protein uL18 (120 aa).

The protein belongs to the universal ribosomal protein uL18 family. As to quaternary structure, part of the 50S ribosomal subunit; part of the 5S rRNA/L5/L18/L25 subcomplex. Contacts the 5S and 23S rRNAs.

Its function is as follows. This is one of the proteins that bind and probably mediate the attachment of the 5S RNA into the large ribosomal subunit, where it forms part of the central protuberance. The protein is Large ribosomal subunit protein uL18 of Gluconobacter oxydans (strain 621H) (Gluconobacter suboxydans).